A 107-amino-acid chain; its full sequence is Nucleoid-associated protein GDI3467/Gdia_2910 (107 aa).

This sequence belongs to the YbaB/EbfC family. In terms of assembly, homodimer.

It localises to the cytoplasm. The protein resides in the nucleoid. Its function is as follows. Binds to DNA and alters its conformation. May be involved in regulation of gene expression, nucleoid organization and DNA protection. This chain is Nucleoid-associated protein GDI3467/Gdia_2910, found in Gluconacetobacter diazotrophicus (strain ATCC 49037 / DSM 5601 / CCUG 37298 / CIP 103539 / LMG 7603 / PAl5).